Reading from the N-terminus, the 306-residue chain is MKHLTAMNELSLEDIHELIEEARELKKGKSDSVLSGKFAANLFFEPSTRTRFSFEVAEKKLGMNVLNLDGVSTSVQKGESLYDTVKTLESIGADVCVIRHSHDHYYDELIGHVGIPVINAGDGCGQHPTQSLLDLMTIHEEWGRFAGLTVSIHGDIKHSRVARSNAEVLTRLGAKVLFSGPDEWRDEDNPYGTYVSPDEAVAHSDVVMLLRIQHERHEKKAAERDYLETFGLSLKRAELLKKDAVIMHPAPVNRGVEIDSALVESGRSRIFKQMENGVYIRMAVLKRALLNGENKKRGDQAYVLFN.

The carbamoyl phosphate site is built by Arg-49 and Thr-50. L-aspartate is bound at residue Lys-77. Residues Arg-99, His-127, and Gln-130 each coordinate carbamoyl phosphate. L-aspartate contacts are provided by Arg-160 and Arg-211. Carbamoyl phosphate contacts are provided by Ala-250 and Pro-251.

Belongs to the aspartate/ornithine carbamoyltransferase superfamily. ATCase family. In terms of assembly, heterododecamer (2C3:3R2) of six catalytic PyrB chains organized as two trimers (C3), and six regulatory PyrI chains organized as three dimers (R2).

The enzyme catalyses carbamoyl phosphate + L-aspartate = N-carbamoyl-L-aspartate + phosphate + H(+). It functions in the pathway pyrimidine metabolism; UMP biosynthesis via de novo pathway; (S)-dihydroorotate from bicarbonate: step 2/3. In terms of biological role, catalyzes the condensation of carbamoyl phosphate and aspartate to form carbamoyl aspartate and inorganic phosphate, the committed step in the de novo pyrimidine nucleotide biosynthesis pathway. This Bacillus licheniformis (strain ATCC 14580 / DSM 13 / JCM 2505 / CCUG 7422 / NBRC 12200 / NCIMB 9375 / NCTC 10341 / NRRL NRS-1264 / Gibson 46) protein is Aspartate carbamoyltransferase catalytic subunit.